Here is a 149-residue protein sequence, read N- to C-terminus: Probable flagellum biosynthesis repressor protein FlbT (149 aa).

It belongs to the FlbT family.

Has a post-transcriptional repressor function in flagellum biogenesis. Associates with the 5'-UTR of fljK mRNA and promotes its degradation. This chain is Probable flagellum biosynthesis repressor protein FlbT, found in Rhizobium etli (strain ATCC 51251 / DSM 11541 / JCM 21823 / NBRC 15573 / CFN 42).